Reading from the N-terminus, the 194-residue chain is Molybdenum cofactor guanylyltransferase (194 aa).

GTP-binding positions include 12 to 14, K25, N53, D70, and D100; that span reads LAG. A Mg(2+)-binding site is contributed by D100.

This sequence belongs to the MobA family. As to quaternary structure, monomer. The cofactor is Mg(2+).

It localises to the cytoplasm. It catalyses the reaction Mo-molybdopterin + GTP + H(+) = Mo-molybdopterin guanine dinucleotide + diphosphate. In terms of biological role, transfers a GMP moiety from GTP to Mo-molybdopterin (Mo-MPT) cofactor (Moco or molybdenum cofactor) to form Mo-molybdopterin guanine dinucleotide (Mo-MGD) cofactor. This Photobacterium profundum (strain SS9) protein is Molybdenum cofactor guanylyltransferase.